A 284-amino-acid polypeptide reads, in one-letter code: MKQKVVSIGDINVANDLPFVLFGGMNVLESRDLAMRICEHYVTVTQKLGIPYVFKASFDKANRSSIHSYRGPGLEEGMKIFQELKQTFGVKIITDVHTAEQAQPVADVVDVIQLPAFLARQTDLVEAMAKTGAVINVKKPQFISPGQIGNIVDKFKEGGNEQVILCDRGTNFGYDNLVVDMLGFGVMKKVSGNAPVIFDVTHALQCRDPFGAASSGRRAQVTELARAGMATGLAGLFIEAHPDPENAKCDGPSALPLAKLEAFLTQIKAIDDLVKSFPELDTEH.

This sequence belongs to the KdsA family.

It is found in the cytoplasm. The enzyme catalyses D-arabinose 5-phosphate + phosphoenolpyruvate + H2O = 3-deoxy-alpha-D-manno-2-octulosonate-8-phosphate + phosphate. It participates in carbohydrate biosynthesis; 3-deoxy-D-manno-octulosonate biosynthesis; 3-deoxy-D-manno-octulosonate from D-ribulose 5-phosphate: step 2/3. The protein operates within bacterial outer membrane biogenesis; lipopolysaccharide biosynthesis. The protein is 2-dehydro-3-deoxyphosphooctonate aldolase of Cronobacter sakazakii (strain ATCC BAA-894) (Enterobacter sakazakii).